We begin with the raw amino-acid sequence, 81 residues long: Small cysteine-rich protein 1 1 (81 aa).

A signal peptide spans 1-19 (MGVHFNICLLLLLVATISS). Residues 20 to 39 (QTLKATEKDDSTDENPFGIY) constitute a propeptide that is removed on maturation.

The protein belongs to the Cnidaria small cysteine-rich protein (SCRiP) family. alpha subfamily. The basic myotoxic domain of rattlesnake crotamine toxins (with 6 Cys residues) has been detected in this protein. However, this protein contains 2 additional Cys at the C-terminal region. Hence, this protein may contain 4 disulfide bonds instead of the 3 suggested by the myotoxin domain.

It localises to the secreted. The protein localises to the nematocyst. In terms of biological role, induces neurotoxic symptoms on zebrafish. Has also been claimed to be implied in calcification, but tests on homolog proteins suggest that proteins of this family have a neurotoxic function and not a calcification function. This Montipora capitata (Rice coral) protein is Small cysteine-rich protein 1 1.